Here is a 346-residue protein sequence, read N- to C-terminus: tRNA N6-adenosine threonylcarbamoyltransferase (346 aa).

Fe cation is bound by residues His111 and His115. Substrate contacts are provided by residues 134–138 (LVSGG), Asp167, Gly180, Asp184, and Asn279. Asp307 lines the Fe cation pocket.

This sequence belongs to the KAE1 / TsaD family. The cofactor is Fe(2+).

It is found in the cytoplasm. It catalyses the reaction L-threonylcarbamoyladenylate + adenosine(37) in tRNA = N(6)-L-threonylcarbamoyladenosine(37) in tRNA + AMP + H(+). Required for the formation of a threonylcarbamoyl group on adenosine at position 37 (t(6)A37) in tRNAs that read codons beginning with adenine. Is involved in the transfer of the threonylcarbamoyl moiety of threonylcarbamoyl-AMP (TC-AMP) to the N6 group of A37, together with TsaE and TsaB. TsaD likely plays a direct catalytic role in this reaction. The protein is tRNA N6-adenosine threonylcarbamoyltransferase of Gloeothece citriformis (strain PCC 7424) (Cyanothece sp. (strain PCC 7424)).